We begin with the raw amino-acid sequence, 20 residues long: Collagenolytic protease 36 kDa C (20 aa).

The Peptidase S1 domain maps to 1 to 20 (IVGGSEATSGQFPYQXSFQD). The segment at 1–20 (IVGGSEATSGQFPYQXSFQD) is disordered.

Belongs to the peptidase S1 family.

The catalysed reaction is Hydrolysis of proteins, with broad specificity for peptide bonds. Native collagen is cleaved about 75% of the length of the molecule from the N-terminus. Low activity on small molecule substrates of both trypsin and chymotrypsin.. Its function is as follows. This enzyme is a serine protease capable of degrading the native triple helix of collagen. The polypeptide is Collagenolytic protease 36 kDa C (Paralithodes camtschaticus (Red king crab)).